We begin with the raw amino-acid sequence, 198 residues long: Cytochrome c oxidase assembly protein CtaG (198 aa).

At 1–12 (MADTGQSDRKER) the chain is on the cytoplasmic side. Residues 13–35 (SNGVIVGTCLAFVVGMVGMAYAA) traverse the membrane as a helical; Signal-anchor for type II membrane protein segment. Residues 36-198 (VPLYDMFCRV…QVKSRTENKL (163 aa)) are Periplasmic-facing.

It belongs to the COX11/CtaG family.

The protein localises to the cell inner membrane. Exerts its effect at some terminal stage of cytochrome c oxidase synthesis, probably by being involved in the insertion of the copper B into subunit I. This Sinorhizobium medicae (strain WSM419) (Ensifer medicae) protein is Cytochrome c oxidase assembly protein CtaG.